The primary structure comprises 304 residues: Cell division protein ZipA (304 aa).

Residues 1-5 (MQDLR) lie on the Periplasmic side of the membrane. The chain crosses the membrane as a helical span at residues 6–26 (LILIVVGAIAIIALLLHGLWT). At 27-304 (SRKERSSVFR…IRDVIDANSH (278 aa)) the chain is on the cytoplasmic side. The disordered stretch occupies residues 31–165 (RSSVFRDRPH…PEPQSQPKQK (135 aa)). A compositionally biased stretch (basic and acidic residues) spans 121-132 (ARPETHKPDQPE). The span at 137–158 (AAPAAAETAPAPAEPAQKTPEP) shows a compositional bias: low complexity.

Belongs to the ZipA family. Interacts with FtsZ via their C-terminal domains.

The protein localises to the cell inner membrane. Essential cell division protein that stabilizes the FtsZ protofilaments by cross-linking them and that serves as a cytoplasmic membrane anchor for the Z ring. Also required for the recruitment to the septal ring of downstream cell division proteins. This is Cell division protein ZipA from Erwinia tasmaniensis (strain DSM 17950 / CFBP 7177 / CIP 109463 / NCPPB 4357 / Et1/99).